The sequence spans 144 residues: D-aminoacyl-tRNA deacylase (144 aa).

Positions 136 to 137 (GP) match the Gly-cisPro motif, important for rejection of L-amino acids motif.

The protein belongs to the DTD family. Homodimer.

The protein localises to the cytoplasm. It carries out the reaction glycyl-tRNA(Ala) + H2O = tRNA(Ala) + glycine + H(+). The enzyme catalyses a D-aminoacyl-tRNA + H2O = a tRNA + a D-alpha-amino acid + H(+). In terms of biological role, an aminoacyl-tRNA editing enzyme that deacylates mischarged D-aminoacyl-tRNAs. Also deacylates mischarged glycyl-tRNA(Ala), protecting cells against glycine mischarging by AlaRS. Acts via tRNA-based rather than protein-based catalysis; rejects L-amino acids rather than detecting D-amino acids in the active site. By recycling D-aminoacyl-tRNA to D-amino acids and free tRNA molecules, this enzyme counteracts the toxicity associated with the formation of D-aminoacyl-tRNA entities in vivo and helps enforce protein L-homochirality. The protein is D-aminoacyl-tRNA deacylase of Pasteurella multocida (strain Pm70).